Consider the following 66-residue polypeptide: Conotoxin mr5.2 (66 aa).

The first 19 residues, 1–19 (MRCVPVFVILLLLIASAPT), serve as a signal peptide directing secretion. The propeptide occupies 20-48 (VDAQLKTKDDMPLASFHANVKRTLQILRD). Residues E57 and E61 each carry the 4-carboxyglutamate modification. Asparagine amide is present on N65.

Post-translationally, contains 2 disulfide bonds that can be either 'C1-C3, C2-C4' or 'C1-C4, C2-C3', since these disulfide connectivities have been observed for conotoxins with cysteine framework V (for examples, see AC P0DQQ7 and AC P81755). Expressed by the venom duct.

The protein resides in the secreted. This chain is Conotoxin mr5.2, found in Conus marmoreus (Marble cone).